We begin with the raw amino-acid sequence, 554 residues long: Glucose-6-phosphate isomerase (554 aa).

Glutamate 359 functions as the Proton donor in the catalytic mechanism. Residues histidine 390 and lysine 518 contribute to the active site.

This sequence belongs to the GPI family.

Its subcellular location is the cytoplasm. The catalysed reaction is alpha-D-glucose 6-phosphate = beta-D-fructose 6-phosphate. It participates in carbohydrate biosynthesis; gluconeogenesis. It functions in the pathway carbohydrate degradation; glycolysis; D-glyceraldehyde 3-phosphate and glycerone phosphate from D-glucose: step 2/4. Catalyzes the reversible isomerization of glucose-6-phosphate to fructose-6-phosphate. The polypeptide is Glucose-6-phosphate isomerase (Pseudomonas fluorescens (strain ATCC BAA-477 / NRRL B-23932 / Pf-5)).